We begin with the raw amino-acid sequence, 180 residues long: NADH-quinone oxidoreductase subunit I (180 aa).

4Fe-4S ferredoxin-type domains are found at residues 46–80 (GRIV…LQKT) and 90–119 (EFFR…LTPD). [4Fe-4S] cluster is bound by residues Cys60, Cys63, Cys66, Cys70, Cys99, Cys102, Cys105, and Cys109.

Belongs to the complex I 23 kDa subunit family. As to quaternary structure, NDH-1 is composed of 14 different subunits. Subunits NuoA, H, J, K, L, M, N constitute the membrane sector of the complex. Requires [4Fe-4S] cluster as cofactor.

The protein localises to the cell membrane. The catalysed reaction is a quinone + NADH + 5 H(+)(in) = a quinol + NAD(+) + 4 H(+)(out). Functionally, NDH-1 shuttles electrons from NADH, via FMN and iron-sulfur (Fe-S) centers, to quinones in the respiratory chain. The immediate electron acceptor for the enzyme in this species is believed to be ubiquinone. Couples the redox reaction to proton translocation (for every two electrons transferred, four hydrogen ions are translocated across the cytoplasmic membrane), and thus conserves the redox energy in a proton gradient. The sequence is that of NADH-quinone oxidoreductase subunit I from Baumannia cicadellinicola subsp. Homalodisca coagulata.